Consider the following 311-residue polypeptide: tRNA-cytidine(32) 2-sulfurtransferase (311 aa).

Positions 47–52 match the PP-loop motif motif; it reads SGGKDS. 3 residues coordinate [4Fe-4S] cluster: C122, C125, and C213.

Belongs to the TtcA family. Homodimer. It depends on Mg(2+) as a cofactor. [4Fe-4S] cluster is required as a cofactor.

Its subcellular location is the cytoplasm. The enzyme catalyses cytidine(32) in tRNA + S-sulfanyl-L-cysteinyl-[cysteine desulfurase] + AH2 + ATP = 2-thiocytidine(32) in tRNA + L-cysteinyl-[cysteine desulfurase] + A + AMP + diphosphate + H(+). It functions in the pathway tRNA modification. In terms of biological role, catalyzes the ATP-dependent 2-thiolation of cytidine in position 32 of tRNA, to form 2-thiocytidine (s(2)C32). The sulfur atoms are provided by the cysteine/cysteine desulfurase (IscS) system. In Salmonella typhimurium (strain LT2 / SGSC1412 / ATCC 700720), this protein is tRNA-cytidine(32) 2-sulfurtransferase.